Here is a 303-residue protein sequence, read N- to C-terminus: tRNA pseudouridine synthase B (303 aa).

Aspartate 38 functions as the Nucleophile in the catalytic mechanism.

Belongs to the pseudouridine synthase TruB family. Type 1 subfamily.

The catalysed reaction is uridine(55) in tRNA = pseudouridine(55) in tRNA. Its function is as follows. Responsible for synthesis of pseudouridine from uracil-55 in the psi GC loop of transfer RNAs. In Oceanobacillus iheyensis (strain DSM 14371 / CIP 107618 / JCM 11309 / KCTC 3954 / HTE831), this protein is tRNA pseudouridine synthase B.